The following is a 538-amino-acid chain: D-alanyl-D-alanine carboxypeptidase (538 aa).

Positions 1-21 are disordered; that stretch reads MKQSSPEPLRPRRTGGRGGAR. Positions 1 to 49 are cleaved as a signal peptide; that stretch reads MKQSSPEPLRPRRTGGRGGARRAAALVTIPLLPMTLLGASPALADASGA. Residue Ser98 is the Acyl-ester intermediate of the active site. Lys101 serves as the catalytic Proton acceptor. An absent in class-A beta-lactamases region spans residues 146–319; it reads TLSAEDLDAM…KGDVGLGGVP (174 aa). Residue Ser347 is part of the active site. Lys459 is a binding site for substrate. Residues 516–538 constitute a propeptide, removed in mature form; that stretch reads GARMMRGPVQGSGELECSWVQAC.

This sequence belongs to the peptidase S13 family.

Its subcellular location is the secreted. It carries out the reaction Preferential cleavage: (Ac)2-L-Lys-D-Ala-|-D-Ala. Also transpeptidation of peptidyl-alanyl moieties that are N-acyl substituents of D-alanine.. Its pathway is cell wall biogenesis; peptidoglycan biosynthesis. Inhibited by benzylpenicillin, cephaloridine, ampicillin and cetiofur. Its function is as follows. Removes C-terminal D-alanyl residues from sugar-peptide cell wall precursors. In Actinomadura sp. (strain R39), this protein is D-alanyl-D-alanine carboxypeptidase (dac).